Reading from the N-terminus, the 502-residue chain is Lysine--tRNA ligase (502 aa).

Residues E411 and E418 each contribute to the Mg(2+) site.

Belongs to the class-II aminoacyl-tRNA synthetase family. As to quaternary structure, homodimer. Mg(2+) is required as a cofactor.

It is found in the cytoplasm. It carries out the reaction tRNA(Lys) + L-lysine + ATP = L-lysyl-tRNA(Lys) + AMP + diphosphate. The polypeptide is Lysine--tRNA ligase (Clostridium tetani (strain Massachusetts / E88)).